The chain runs to 424 residues: N-succinylarginine dihydrolase (424 aa).

Residues 19-28 (AGLSRGNVAS), Asn-110, and 137-138 (HR) contribute to the substrate site. Glu-174 is an active-site residue. Arg-206 is a binding site for substrate. The active site involves His-242. 2 residues coordinate substrate: Asp-244 and Asn-351. Cys-357 functions as the Nucleophile in the catalytic mechanism.

It belongs to the succinylarginine dihydrolase family. In terms of assembly, homodimer.

It catalyses the reaction N(2)-succinyl-L-arginine + 2 H2O + 2 H(+) = N(2)-succinyl-L-ornithine + 2 NH4(+) + CO2. It participates in amino-acid degradation; L-arginine degradation via AST pathway; L-glutamate and succinate from L-arginine: step 2/5. Catalyzes the hydrolysis of N(2)-succinylarginine into N(2)-succinylornithine, ammonia and CO(2). This chain is N-succinylarginine dihydrolase, found in Zymomonas mobilis subsp. mobilis (strain ATCC 31821 / ZM4 / CP4).